The sequence spans 323 residues: Transaldolase (323 aa).

The Schiff-base intermediate with substrate role is filled by lysine 133.

The protein belongs to the transaldolase family. Type 1 subfamily. In terms of assembly, monomer.

The enzyme catalyses D-sedoheptulose 7-phosphate + D-glyceraldehyde 3-phosphate = D-erythrose 4-phosphate + beta-D-fructose 6-phosphate. It participates in carbohydrate degradation; pentose phosphate pathway; D-glyceraldehyde 3-phosphate and beta-D-fructose 6-phosphate from D-ribose 5-phosphate and D-xylulose 5-phosphate (non-oxidative stage): step 2/3. In terms of biological role, transaldolase important for the balance of metabolites in the pentose-phosphate pathway. Involved in xylose fermentation to ethanol. The polypeptide is Transaldolase (Fusarium oxysporum f. sp. lycopersici (strain 4287 / CBS 123668 / FGSC 9935 / NRRL 34936) (Fusarium vascular wilt of tomato)).